A 276-amino-acid polypeptide reads, in one-letter code: SF-assemblin (276 aa).

Residues 1–31 form a nonhelical region region; the sequence is MSLRPFETPGGLSSLSPRRRDFSPTRPGTNG. A disordered region spans residues 1–37; that stretch reads MSLRPFETPGGLSSLSPRRRDFSPTRPGTNGPSAKLE. Residues 32 to 276 form a rod region; sequence PSAKLEHVTE…LQEGLKLVSA (245 aa). Residues 67-145 adopt a coiled-coil conformation; it reads LLQESLQRIE…LVRDERESRR (79 aa).

This sequence belongs to the SF-assemblin family.

The protein localises to the cytoplasm. It is found in the cytoskeleton. In terms of biological role, major component of the striated microtubule-associated fibers (SMAFs; system-I-fibers). This Chlamydomonas reinhardtii (Chlamydomonas smithii) protein is SF-assemblin.